The following is a 178-amino-acid chain: Cytochrome b6-f complex iron-sulfur subunit (178 aa).

Residues 20–42 (LLTFGTATGVALGALYPVANYFM) traverse the membrane as a helical segment. The 97-residue stretch at 65–161 (KTGWLATHQA…VDIEDDAVLV (97 aa)) folds into the Rieske domain. [2Fe-2S] cluster is bound by residues cysteine 107, histidine 109, cysteine 125, and histidine 128. Cysteine 112 and cysteine 127 are joined by a disulfide.

Belongs to the Rieske iron-sulfur protein family. As to quaternary structure, the 4 large subunits of the cytochrome b6-f complex are cytochrome b6, subunit IV (17 kDa polypeptide, PetD), cytochrome f and the Rieske protein, while the 4 small subunits are PetG, PetL, PetM and PetN. The complex functions as a dimer. [2Fe-2S] cluster serves as cofactor.

It is found in the cellular thylakoid membrane. The enzyme catalyses 2 oxidized [plastocyanin] + a plastoquinol + 2 H(+)(in) = 2 reduced [plastocyanin] + a plastoquinone + 4 H(+)(out). In terms of biological role, component of the cytochrome b6-f complex, which mediates electron transfer between photosystem II (PSII) and photosystem I (PSI), cyclic electron flow around PSI, and state transitions. The polypeptide is Cytochrome b6-f complex iron-sulfur subunit (Prochlorococcus marinus (strain MIT 9301)).